Reading from the N-terminus, the 1519-residue chain is Putative lipoprotein YghJ (1519 aa).

The signal sequence occupies residues 1-23 (MNKKFKYKKSLLAAILSATLLAG). Disordered stretches follow at residues 22-107 (AGCD…GATC) and 226-247 (NAAT…TTPG). Residue Cys24 is the site of N-palmitoyl cysteine attachment. Cys24 carries S-diacylglycerol cysteine lipidation. Residues 31-42 (SSSDTPPVDSGT) are compositionally biased toward low complexity. Residues 51–77 (DPTPNPEPTPEPTPDPEPTPEPIPDPE) show a composition bias toward pro residues. Residues 97-107 (GGSQRVTGATC) show a composition bias toward polar residues. Residues 234-247 (STHTSPVVPVTTPG) show a composition bias toward low complexity. The Peptidase M60 domain occupies 1080–1380 (GNMQSTGLWA…MYAQLKEWAE (301 aa)). The disordered stretch occupies residues 1497-1519 (DLPKPEQGPETINQVTEHKMSAE).

The protein to V.cholerae AcfD (VC_0845).

The protein resides in the cell membrane. In terms of biological role, may be a substrate of the type II secretion system beta (T2SS-beta). The polypeptide is Putative lipoprotein YghJ (yghJ) (Escherichia coli O78:H11 (strain H10407 / ETEC)).